Here is an 80-residue protein sequence, read N- to C-terminus: uncharacterized protein (80 aa).

An N-terminal signal peptide occupies residues 1–15 (MVKLSFTLRFGDVWV).

This is an uncharacterized protein from Archaeoglobus fulgidus (strain ATCC 49558 / DSM 4304 / JCM 9628 / NBRC 100126 / VC-16).